Reading from the N-terminus, the 206-residue chain is Protein Nef (206 aa).

Residue G2 is the site of N-myristoyl glycine; by host attachment. Residue S6 is modified to Phosphoserine; by host. The acidic; interacts with host PACS1 and PACS2; stabilizes the interaction of NEF/MHC-I with host AP1M1; necessary for MHC-I internalization stretch occupies residues 62–65; that stretch reads EEEE. Positions 69-78 are SH3-binding; interaction with Src family tyrosine kinases; it reads PVTPQVPLRP. The short motif at 72-75 is the PxxP; stabilizes the interaction of NEF/MHC-I with host AP1M1; necessary for MHC-I internalization element; the sequence is PQVP. Residues 108 to 124 form a mediates dimerization, Nef-PTE1 interaction region; it reads DILDLWIYHTQGYFPDW. Residues 148–180 form a binding to ATP6V1H region; that stretch reads VEPEKLEEANKGENTSLLHPVSLHGMDDPEREV. Residues 164–165 carry the Dileucine internalization motif; necessary for CD4 internalization motif; sequence LL. The Diacidic; necessary for CD4 internalization motif lies at 174 to 175; the sequence is DD.

It belongs to the lentivirus primate group Nef protein family. Monomer; cytosolic form. Homodimer; membrane bound form. Interacts with Nef associated p21-activated kinase (PAK2); this interaction activates PAK2. Associates with the Nef-MHC-I-AP1 complex; this complex is required for MHC-I internalization. Interacts (via C-terminus) with host PI3-kinase. Interacts with host PACS1; this interaction seems to be weak. Interacts with host PACS2. Interacts with host LCK and MAPK3; these interactions inhibit the kinase activity of the latter. Interacts with host ATP6V1H; this interaction may play a role in CD4 endocytosis. Associates with the CD4-Nef-AP2 complex; this complex is required for CD4 internalization. Interacts with host AP2 subunit alpha and AP2 subunit sigma2. Interacts with TCR-zeta chain; this interaction up-regulates the Fas ligand (FasL) surface expression. Interacts with host HCK, LYN, and SRC; these interactions activate the Src family kinases. Interacts with MAP3K5; this interaction inhibits the Fas and TNFR-mediated death signals. Interacts with beta-COP and PTE1. Interacts with human RACK1; this increases Nef phosphorylation by PKC. Interacts with TP53; this interaction decreases the half-life of TP53, protecting the infected cell against p53-mediated apoptosis. In terms of processing, the virion-associated Nef proteins are cleaved by the viral protease to release the soluble C-terminal core protein. Nef is probably cleaved concomitantly with viral structural proteins on maturation of virus particles. Post-translationally, myristoylated. Phosphorylated on serine residues, probably by host PKCdelta and theta.

It is found in the host cell membrane. It localises to the virion. Its subcellular location is the secreted. The protein localises to the host Golgi apparatus membrane. In terms of biological role, factor of infectivity and pathogenicity, required for optimal virus replication. Alters numerous pathways of T-lymphocyte function and down-regulates immunity surface molecules in order to evade host defense and increase viral infectivity. Alters the functionality of other immunity cells, like dendritic cells, monocytes/macrophages and NK cells. Its function is as follows. In infected CD4(+) T-lymphocytes, down-regulates the surface MHC-I, mature MHC-II, CD4, CD28, CCR5 and CXCR4 molecules. Mediates internalization and degradation of host CD4 through the interaction of with the cytoplasmic tail of CD4, the recruitment of AP-2 (clathrin adapter protein complex 2), internalization through clathrin coated pits, and subsequent transport to endosomes and lysosomes for degradation. Diverts host MHC-I molecules to the trans-Golgi network-associated endosomal compartments by an endocytic pathway to finally target them for degradation. MHC-I down-regulation may involve AP-1 (clathrin adapter protein complex 1) or possibly Src family kinase-ZAP70/Syk-PI3K cascade recruited by PACS2. In consequence infected cells are masked for immune recognition by cytotoxic T-lymphocytes. Decreasing the number of immune receptors also prevents reinfection by more HIV particles (superinfection). Down-regulates host SERINC3 and SERINC5 thereby excluding these proteins from the viral particles. Virion infectivity is drastically higher when SERINC3 or SERINC5 are excluded from the viral envelope, because these host antiviral proteins impair the membrane fusion event necessary for subsequent virion penetration. Bypasses host T-cell signaling by inducing a transcriptional program nearly identical to that of anti-CD3 cell activation. Interaction with TCR-zeta chain up-regulates the Fas ligand (FasL). Increasing surface FasL molecules and decreasing surface MHC-I molecules on infected CD4(+) cells send attacking cytotoxic CD8+ T-lymphocytes into apoptosis. Functionally, plays a role in optimizing the host cell environment for viral replication without causing cell death by apoptosis. Protects the infected cells from apoptosis in order to keep them alive until the next virus generation is ready to strike. Inhibits the Fas and TNFR-mediated death signals by blocking MAP3K5/ASK1. Decreases the half-life of TP53, protecting the infected cell against p53-mediated apoptosis. Inhibits the apoptotic signals regulated by the Bcl-2 family proteins through the formation of a Nef/PI3-kinase/PAK2 complex that leads to activation of PAK2 and induces phosphorylation of host BAD. In terms of biological role, extracellular Nef protein targets CD4(+) T-lymphocytes for apoptosis by interacting with CXCR4 surface receptors. The polypeptide is Protein Nef (Human immunodeficiency virus type 1 group M subtype B (isolate LW123) (HIV-1)).